A 557-amino-acid polypeptide reads, in one-letter code: Formate--tetrahydrofolate ligase (557 aa).

Position 67 to 74 (67 to 74 (TPAGEGKT)) interacts with ATP.

This sequence belongs to the formate--tetrahydrofolate ligase family.

The enzyme catalyses (6S)-5,6,7,8-tetrahydrofolate + formate + ATP = (6R)-10-formyltetrahydrofolate + ADP + phosphate. Its pathway is one-carbon metabolism; tetrahydrofolate interconversion. The polypeptide is Formate--tetrahydrofolate ligase (Cereibacter sphaeroides (strain ATCC 17029 / ATH 2.4.9) (Rhodobacter sphaeroides)).